Reading from the N-terminus, the 93-residue chain is Large ribosomal subunit protein bL27 (93 aa).

The propeptide occupies 1–8; the sequence is MIMDLQFF. Positions 8 to 29 are disordered; that stretch reads FSHHKGGGSTANGRNSAGRRLG.

This sequence belongs to the bacterial ribosomal protein bL27 family. In terms of processing, the N-terminus is cleaved by ribosomal processing cysteine protease Prp.

In Limosilactobacillus reuteri (strain DSM 20016) (Lactobacillus reuteri), this protein is Large ribosomal subunit protein bL27.